A 474-amino-acid chain; its full sequence is Coiled-coil domain-containing protein 6 (474 aa).

The segment covering 1–10 (MADSASESDT) has biased composition (acidic residues). The interval 1–47 (MADSASESDTDGAGGNSSSSAAMQSSCSSTSGGGGGGGGGGGGGKSG) is disordered. At Ala2 the chain carries N-acetylalanine. The span at 16-30 (NSSSSAAMQSSCSST) shows a compositional bias: low complexity. Gly residues predominate over residues 31-47 (SGGGGGGGGGGGGGKSG). Position 52 is a phosphoserine (Ser52). Residues 53 to 237 (PFRLEELTNR…KRILQEKLDQ (185 aa)) adopt a coiled-coil conformation. 3 consecutive repeat copies span residues 106 to 134 (EQEEEFISNTLFKKIQALQKEKETLAVNY), 135 to 163 (EKEEEFLTNELSRKLMQLQHEKAELEQHL), and 164 to 192 (EQEQEFQVNKLMKKIKKLENDTISKQLTL). The tract at residues 106 to 235 (EQEEEFISNT…AEKRILQEKL (130 aa)) is 5 X 29 AA tandem repeats. A 4; approximate repeat occupies 193 to 206 (EQLRREKIDLENTL). Copy 5 of the repeat occupies 207-235 (EQEQEALVNRLWKRMDKLEAEKRILQEKL). Ser240, Ser244, Ser249, Ser254, Ser284, and Ser323 each carry phosphoserine. Residues 253-332 (DSPENMMRHI…SESESSLEMD (80 aa)) are a coiled coil. The segment at 342-369 (AQGLRPRTVSSPIPYTPSPSSSRPISPG) is disordered. Position 349 is a phosphothreonine (Thr349). Positions 351–368 (SSPIPYTPSPSSSRPISP) are enriched in low complexity. 2 positions are modified to phosphoserine: Ser363 and Ser367. Omega-N-methylarginine is present on Arg387. 2 positions are modified to phosphoserine: Ser395 and Ser413. Residues 397-474 (GLHVQHMGTS…QHSAHPSSQP (78 aa)) form a disordered region. The span at 426–451 (PTPPPSPNTQTPVQPPPPPPPPPMQP) shows a compositional bias: pro residues. The short motif at 442–451 (PPPPPPPMQP) is the SH3-binding element. The span at 459–474 (SQPTPSQHSAHPSSQP) shows a compositional bias: low complexity.

As to expression, ubiquitously expressed.

Its subcellular location is the cytoplasm. It is found in the cytoskeleton. This is Coiled-coil domain-containing protein 6 (CCDC6) from Homo sapiens (Human).